Here is a 288-residue protein sequence, read N- to C-terminus: Co-chaperone protein DjlA (288 aa).

Over 1-6 the chain is Periplasmic; the sequence is MNFIGK. A helical transmembrane segment spans residues 7 to 30; the sequence is ILGFIIGYRFGGLFGGIAGLILGH. The Cytoplasmic portion of the chain corresponds to 31 to 288; sequence IADKKLYELG…DLICKVKGWK (258 aa). The region spanning 222–288 is the J domain; the sequence is DAYKVLGVNA…DLICKVKGWK (67 aa).

As to quaternary structure, homodimer.

The protein resides in the cell inner membrane. Its function is as follows. Regulatory DnaK co-chaperone. Direct interaction between DnaK and DjlA is needed for the induction of the wcaABCDE operon, involved in the synthesis of a colanic acid polysaccharide capsule, possibly through activation of the RcsB/RcsC phosphotransfer signaling pathway. The colanic acid capsule may help the bacterium survive conditions outside the host. The sequence is that of Co-chaperone protein DjlA from Mannheimia succiniciproducens (strain KCTC 0769BP / MBEL55E).